The primary structure comprises 312 residues: Protoheme IX farnesyltransferase (312 aa).

The next 9 helical transmembrane spans lie at 31-51 (LLMK…GLFI), 58-78 (PLLS…AGAI), 107-127 (TALT…AICV), 130-150 (ISSI…TMWL), 157-177 (NIVI…SAVT), 184-204 (CLML…TLSL), 229-249 (YSIL…YFTD), 250-270 (IAGL…LCYA), and 286-306 (FKYS…EHCI).

The protein belongs to the UbiA prenyltransferase family. Protoheme IX farnesyltransferase subfamily.

The protein resides in the cell inner membrane. It carries out the reaction heme b + (2E,6E)-farnesyl diphosphate + H2O = Fe(II)-heme o + diphosphate. It participates in porphyrin-containing compound metabolism; heme O biosynthesis; heme O from protoheme: step 1/1. In terms of biological role, converts heme B (protoheme IX) to heme O by substitution of the vinyl group on carbon 2 of heme B porphyrin ring with a hydroxyethyl farnesyl side group. The protein is Protoheme IX farnesyltransferase of Orientia tsutsugamushi (strain Ikeda) (Rickettsia tsutsugamushi).